A 345-amino-acid polypeptide reads, in one-letter code: Phosphoribosylformylglycinamidine cyclo-ligase (345 aa).

It belongs to the AIR synthase family.

Its subcellular location is the cytoplasm. The catalysed reaction is 2-formamido-N(1)-(5-O-phospho-beta-D-ribosyl)acetamidine + ATP = 5-amino-1-(5-phospho-beta-D-ribosyl)imidazole + ADP + phosphate + H(+). Its pathway is purine metabolism; IMP biosynthesis via de novo pathway; 5-amino-1-(5-phospho-D-ribosyl)imidazole from N(2)-formyl-N(1)-(5-phospho-D-ribosyl)glycinamide: step 2/2. The protein is Phosphoribosylformylglycinamidine cyclo-ligase of Shewanella frigidimarina (strain NCIMB 400).